The following is a 349-amino-acid chain: PDZ and LIM domain protein 2 (349 aa).

Positions 1-84 (MALTVDVAGP…PLRLQLDRSQ (84 aa)) constitute a PDZ domain. The interval 74-147 (SPLRLQLDRS…TPPPTSPVAL (74 aa)) is disordered. Positions 81–94 (DRSQTASPGQTNGE) are enriched in polar residues. A phosphoserine mark is found at S124, S127, S129, S134, and S137. 2 positions are modified to phosphothreonine: T138 and T142. A phosphoserine mark is found at S143 and S163. Residues 169–212 (AHHLTYPGHPTSQQAGHSSPSDSAVRVLLHSPGRPSSPRFSSLD) form a disordered region. A compositionally biased stretch (polar residues) spans 178–190 (PTSQQAGHSSPSD). A phosphoserine mark is found at S199, S204, S205, S209, S210, and S263. A compositionally biased stretch (low complexity) spans 199 to 210 (SPGRPSSPRFSS). In terms of domain architecture, LIM zinc-binding spans 281–341 (HTCEKCSVNI…EKHARQRYSM (61 aa)).

In terms of assembly, interacts with alpha-actinins ACTN1 and ACTN4, FLNA and MYH9. Interacts (via LIM zinc-binding domain) with MKRN2. Highly expressed in lung. Expressed at intermediate level in kidney, testis and spleen. Weakly expressed in heart and brain.

The protein resides in the cytoplasm. It localises to the cytoskeleton. Probable adapter protein located at the actin cytoskeleton that promotes cell attachment. Necessary for the migratory capacity of epithelial cells. Overexpression enhances cell adhesion to collagen and fibronectin and suppresses anchorage independent growth. May contribute to tumor cell migratory capacity. In Mus musculus (Mouse), this protein is PDZ and LIM domain protein 2 (Pdlim2).